We begin with the raw amino-acid sequence, 239 residues long: Isoprenyl transferase (239 aa).

The active site involves Asp16. Position 16 (Asp16) interacts with Mg(2+). Substrate is bound by residues 17–20, Trp21, Arg29, His33, and 61–63; these read GNGR and STE. Residue Asn64 is the Proton acceptor of the active site. Residues Trp65, Arg67, Arg187, and 193–195 each bind substrate; that span reads RLS. Glu206 serves as a coordination point for Mg(2+).

It belongs to the UPP synthase family. Homodimer. Mg(2+) serves as cofactor.

In terms of biological role, catalyzes the condensation of isopentenyl diphosphate (IPP) with allylic pyrophosphates generating different type of terpenoids. In Lactobacillus johnsonii (strain CNCM I-12250 / La1 / NCC 533), this protein is Isoprenyl transferase.